A 64-amino-acid polypeptide reads, in one-letter code: DNA gyrase inhibitor YacG (64 aa).

4 residues coordinate Zn(2+): cysteine 9, cysteine 12, cysteine 28, and cysteine 32. Residues 45-64 (KRIPSAGDLSDSDDWSEQQP) are disordered. Acidic residues predominate over residues 54 to 64 (SDSDDWSEQQP).

Belongs to the DNA gyrase inhibitor YacG family. Interacts with GyrB. The cofactor is Zn(2+).

Its function is as follows. Inhibits all the catalytic activities of DNA gyrase by preventing its interaction with DNA. Acts by binding directly to the C-terminal domain of GyrB, which probably disrupts DNA binding by the gyrase. In Klebsiella pneumoniae (strain 342), this protein is DNA gyrase inhibitor YacG.